The following is a 1067-amino-acid chain: Zinc finger MIZ domain-containing protein 1 (1067 aa).

The segment at 1-120 (MNSMDRHIQQ…HQKSRQSDPP (120 aa)) is sufficient for transactivation activity; sufficient for interaction with NOTCH1. A Glycyl lysine isopeptide (Lys-Gly) (interchain with G-Cter in SUMO2) cross-link involves residue lysine 91. Disordered stretches follow at residues 112 to 141 (QKSR…TLSH) and 327 to 542 (NSQF…PFPP). Residues 128–141 (PLSSMSSMKPTLSH) are compositionally biased toward low complexity. Positions 413 to 429 (YGNQQYGPNSQFPTQPG) are enriched in polar residues. A compositionally biased stretch (pro residues) spans 431-440 (YPAPNPPRPL). The span at 479 to 497 (NNTFSGSSYSNYSQGNVNR) shows a compositional bias: low complexity. Residues 510–521 (SPVPGNPTPPMT) are compositionally biased toward pro residues. An SP-RING-type zinc finger spans residues 727–808 (GEDGVEQTAI…MWGILNAIQH (82 aa)). Zn(2+) contacts are provided by cysteine 758, histidine 760, cysteine 781, and cysteine 784. Glycyl lysine isopeptide (Lys-Gly) (interchain with G-Cter in SUMO2) cross-links involve residues lysine 834 and lysine 843. A transactivation domain region spans residues 837–1067 (PDGIPSKRFK…DDLLSLFENN (231 aa)). A compositionally biased stretch (pro residues) spans 868 to 879 (GPSPYPLPPPPG). The interval 868–1067 (GPSPYPLPPP…DDLLSLFENN (200 aa)) is disordered. 2 stretches are compositionally biased toward polar residues: residues 881 to 895 (TNSN…NYQG) and 951 to 961 (SSDQPHPSIQQ). Residues 981-996 (APPPPPSQPPRQPPQA) are compositionally biased toward pro residues. Over residues 1040–1067 (PDELLSYLDPPDLPSNSNDDLLSLFENN) the composition is skewed to low complexity.

As to quaternary structure, interacts with AR, but not with ESR1, NR3C1, PGR, THRB nor VDR. Interacts with NOTCH1 and RBPJ. Interacts with SMARCA4. Interacts (via SP-RING-type domain) with SMAD3 and SMAD4 (via MH2 domain). Expressed most abundantly in ovary and, at lower levels, in prostate, spleen and testis. Weak expression, if any, in thymus, small intestine, colon and peripheral blood leukocytes.

It is found in the nucleus. It localises to the nucleoplasm. The protein localises to the cytoplasm. Acts as a transcriptional coactivator. Increases ligand-dependent transcriptional activity of AR and promotes AR sumoylation. The stimulation of AR activity is dependent upon sumoylation. Also functions as a transcriptional coactivator in the TGF-beta signaling pathway by increasing the activity of the SMAD3/SMAD4 transcriptional complex. Involved in transcriptional activation of a subset of NOTCH1 target genes including MYC. Involved in thymocyte and T cell development. Involved in the regulation of postmitotic positioning of pyramidal neurons in the developing cerebral cortex. This Homo sapiens (Human) protein is Zinc finger MIZ domain-containing protein 1.